Reading from the N-terminus, the 90-residue chain is Phosphoribosyl-ATP pyrophosphatase (90 aa).

This sequence belongs to the PRA-PH family.

It localises to the cytoplasm. It carries out the reaction 1-(5-phospho-beta-D-ribosyl)-ATP + H2O = 1-(5-phospho-beta-D-ribosyl)-5'-AMP + diphosphate + H(+). Its pathway is amino-acid biosynthesis; L-histidine biosynthesis; L-histidine from 5-phospho-alpha-D-ribose 1-diphosphate: step 2/9. This chain is Phosphoribosyl-ATP pyrophosphatase, found in Streptomyces avermitilis (strain ATCC 31267 / DSM 46492 / JCM 5070 / NBRC 14893 / NCIMB 12804 / NRRL 8165 / MA-4680).